The sequence spans 431 residues: Levansucrase LscC (431 aa).

Positions 61, 62, 148, 218, and 219 each coordinate sucrose. Aspartate 62 serves as the catalytic Nucleophile. Glutamate 303 functions as the Proton donor/acceptor in the catalytic mechanism.

It belongs to the glycosyl hydrolase 68 family.

It is found in the periplasm. The enzyme catalyses [6)-beta-D-fructofuranosyl-(2-&gt;](n) alpha-D-glucopyranoside + sucrose = [6)-beta-D-fructofuranosyl-(2-&gt;](n+1) alpha-D-glucopyranoside + D-glucose. Functionally, catalyzes the synthesis of levan, a fructose polymer, by transferring the fructosyl moiety from sucrose to a growing acceptor molecule. This Pseudomonas savastanoi pv. glycinea (Pseudomonas syringae pv. glycinea) protein is Levansucrase LscC.